The primary structure comprises 425 residues: MKYLILILIFFIEINNGSRLINSGNLFSELKDYYIPENLNYYSGGYSEQHCKDSSYITIPLGVTGGLDEGSLSSFLLTKKGSSLFIGLDAGTVWQGVRRLTMLQDFNSVFNITYPPWATLPEQRATWFIKNHIQGYLIGHSHLDHVGGLIVESAEDQLSPKKNELEVSQPEIYRGCIEMIHKMGYVSDFPNITSIPDQKKPIIGINETLYSMATDLFNGFVWPSLPNYGRYSYYYLGNGNQYSFKDLTPYANKYVTKVQNDFPFNHLVKSFEICHDSLTSTAFILTDSQSGEQIVFFSDTGISTTKCDWEFKILQVWRNIKIDKLKAVYIESSFTNEVADNVLFGHLRPKDIMKLMDSLLENSIQTSPPKTNLKHVKLIIEHIKPQVGMNQYYLTSQRMVYQQLQEINNHGVKVIIPNQGVPICL.

Positions methionine 1–glycine 17 are cleaved as a signal peptide.

It belongs to the cyclic nucleotide phosphodiesterase class-II family.

It localises to the secreted. Its subcellular location is the extracellular space. The protein resides in the cell surface. It catalyses the reaction 3',5'-cyclic AMP + H2O = AMP + H(+). It carries out the reaction 3',5'-cyclic GMP + H2O = GMP + H(+). Inhibited by dithiotreitol (DTT). Its function is as follows. Phosphodiesterase with dual cAMP/cGMP specificity. However, displays a preference for cAMP over cGMP. Seems to regulate cAMP/cGMP concentration especially during cell aggregation. In Dictyostelium discoideum (Social amoeba), this protein is cAMP/cGMP-dependent 3',5'-cAMP/cGMP phosphodiesterase 7 (pde7).